The chain runs to 416 residues: NADH-quinone oxidoreductase subunit D (416 aa).

The protein belongs to the complex I 49 kDa subunit family. In terms of assembly, NDH-1 is composed of 14 different subunits. Subunits NuoB, C, D, E, F, and G constitute the peripheral sector of the complex.

The protein localises to the cell inner membrane. The catalysed reaction is a quinone + NADH + 5 H(+)(in) = a quinol + NAD(+) + 4 H(+)(out). Functionally, NDH-1 shuttles electrons from NADH, via FMN and iron-sulfur (Fe-S) centers, to quinones in the respiratory chain. The immediate electron acceptor for the enzyme in this species is believed to be ubiquinone. Couples the redox reaction to proton translocation (for every two electrons transferred, four hydrogen ions are translocated across the cytoplasmic membrane), and thus conserves the redox energy in a proton gradient. This chain is NADH-quinone oxidoreductase subunit D, found in Rhodopseudomonas palustris (strain BisB5).